The sequence spans 273 residues: Chlorophyll a-b binding protein 8, chloroplastic (273 aa).

A chloroplast-targeting transit peptide spans 1–32; the sequence is MATQALISSSSISTSAEAARQIIGSRISQSVT. Arg-33 carries the N2-acetylarginine modification. Position 56 (Trp-56) interacts with chlorophyll b. Phe-76, Ser-82, and Glu-100 together coordinate chlorophyll a. Arg-105 lines the chlorophyll b pocket. The helical transmembrane segment at 106–126 threads the bilayer; it reads FAMLGAAGAIAPEILGKAGLI. 3 residues coordinate chlorophyll b: Ile-140, Glu-167, and Arg-170. The chlorophyll a site is built by Lys-224, Glu-225, Asn-228, Arg-230, Gln-242, and His-257. A helical membrane pass occupies residues 231–251; that stretch reads LAMLAILGYFIQALVTGVGPY.

It belongs to the light-harvesting chlorophyll a/b-binding (LHC) protein family. The LHC complex consists of chlorophyll a-b binding proteins. It depends on Binds at least 14 chlorophylls (8 Chl-a and 6 Chl-b) and carotenoids such as lutein and neoxanthin. as a cofactor. Post-translationally, photoregulated by reversible phosphorylation of its threonine residues.

The protein resides in the plastid. Its subcellular location is the chloroplast thylakoid membrane. In terms of biological role, the light-harvesting complex (LHC) functions as a light receptor, it captures and delivers excitation energy to photosystems with which it is closely associated. The sequence is that of Chlorophyll a-b binding protein 8, chloroplastic (CAB8) from Solanum lycopersicum (Tomato).